A 175-amino-acid polypeptide reads, in one-letter code: Arginine repressor (175 aa).

The interval 1–23 (MSVSTPERGGAEQGKGPAIARTR) is disordered.

The protein belongs to the ArgR family.

The protein resides in the cytoplasm. It functions in the pathway amino-acid biosynthesis; L-arginine biosynthesis [regulation]. Its function is as follows. Regulates arginine biosynthesis genes. The polypeptide is Arginine repressor (Nocardia farcinica (strain IFM 10152)).